A 167-amino-acid polypeptide reads, in one-letter code: Golgin subfamily A member 7B (167 aa).

2 S-palmitoyl cysteine lipidation sites follow: cysteine 78 and cysteine 81. The interval 140–167 (RCSSGSSSSGSSSGSGSSSAGGGGAGAR) is disordered. Residues 142 to 157 (SSGSSSSGSSSGSGSS) are compositionally biased toward low complexity. Residues 158 to 167 (SAGGGGAGAR) are compositionally biased toward gly residues.

It belongs to the ERF4 family. Post-translationally, palmitoylated by ZDHHC5. Palmitoylation is required for the maintenance of ZDHHC5 at the plasma membrane.

The protein localises to the cell membrane. It localises to the golgi apparatus membrane. In terms of biological role, play a role in cell adhesion by regulating the plasma membrane localization of the palmitoyltransferase ZDHHC5. May be involved in protein transport from Golgi to cell surface. The chain is Golgin subfamily A member 7B (GOLGA7B) from Mus musculus (Mouse).